We begin with the raw amino-acid sequence, 393 residues long: Dual specificity mitogen-activated protein kinase kinase 1 (393 aa).

The segment at 1-27 (MPKKKPTPIQLNPAPDGSAVNGTSSAE) is disordered. The 294-residue stretch at 68–361 (FEKISELGAG…LKQLMVHAFI (294 aa)) folds into the Protein kinase domain. Residues 74 to 82 (LGAGNGGVV) and Lys97 contribute to the ATP site. Asp190 functions as the Proton acceptor in the catalytic mechanism. Phosphoserine; by RAF is present on residues Ser218 and Ser222. The interval 270–307 (ELELLFGCHVEGDAAETPPRPRTPGRPLSSYGMDSRPP) is RAF1-binding. Thr286 bears the Phosphothreonine mark. Thr292 is modified (phosphothreonine; by MAPK1). Residue Ser298 is modified to Phosphoserine; by PAK.

It belongs to the protein kinase superfamily. STE Ser/Thr protein kinase family. MAP kinase kinase subfamily. As to quaternary structure, found in a complex with at least BRAF, HRAS, MAP2K1, MAPK3/ERK1 and RGS14. Forms a heterodimer with MAP2K2/MEK2. Forms heterodimers with KSR2 which further dimerize to form tetramers. Interacts with KSR1 or KSR2 and BRAF; the interaction with KSR1 or KSR2 mediates KSR1-BRAF or KSR2-BRAF dimerization. Interacts with ARBB2, LAMTOR3, MAPK1/ERK2 and RAF1. Interacts with MAPK1/ERK2. Interacts with MORG1. Interacts with PPARG. Interacts with SGK1. Interacts with BIRC6/bruce. Interacts with KAT7; the interaction promotes KAT7 phosphorylation. Interacts with RAF1 and NEK10; the interaction is required for ERK1/2-signaling pathway activation in response to UV irradiation. Interacts with TRAF3IP3. Interacts with MOS. Phosphorylation at Ser-218 and Ser-222 by MAP kinase kinase kinases (BRAF or MEKK1) positively regulates kinase activity. Also phosphorylated at Thr-292 by MAPK1/ERK2 and at Ser-298 by PAK. MAPK1/ERK2 phosphorylation of Thr-292 occurs in response to cellular adhesion and leads to inhibition of Ser-298 phosphorylation by PAK. Autophosphorylated at Ser-218 and Ser-222, autophosphosphorylation is promoted by NEK10 following UV irradiation.

It is found in the cytoplasm. The protein resides in the cytoskeleton. The protein localises to the microtubule organizing center. Its subcellular location is the centrosome. It localises to the spindle pole body. It is found in the nucleus. The protein resides in the membrane. The enzyme catalyses L-seryl-[protein] + ATP = O-phospho-L-seryl-[protein] + ADP + H(+). The catalysed reaction is L-threonyl-[protein] + ATP = O-phospho-L-threonyl-[protein] + ADP + H(+). It catalyses the reaction L-tyrosyl-[protein] + ATP = O-phospho-L-tyrosyl-[protein] + ADP + H(+). Ras proteins such as HRAS mediate the activation of RAF proteins such as RAF1 or BRAF which in turn activate extracellular signal-regulated kinases (ERK) through MAPK (mitogen-activated protein kinases) and ERK kinases MAP2K1/MEK1 and MAP2K2/MEK2. Activation occurs through phosphorylation of Ser-218 and Ser-222. MAP2K1/MEK1 binds KSR1 or KSR2 releasing the inhibitory intramolecular interaction between KSR1 or KSR2 protein kinase and N-terminal domains. This allows KSR1 or KSR2 dimerization with BRAF leading to BRAF activation and phosphorylation of MAP2K1. MAP2K1/MEK1 is also the target of negative feed-back regulation by its substrate kinases, such as MAPK1/ERK2. These phosphorylate MAP2K1/MEK1 on Thr-292, thereby facilitating dephosphorylation of the activating residues Ser-218 and Ser-222. Inhibited by serine/threonine phosphatase 2A. Functionally, dual specificity protein kinase which acts as an essential component of the MAP kinase signal transduction pathway. Binding of extracellular ligands such as growth factors, cytokines and hormones to their cell-surface receptors activates RAS and this initiates RAF1 activation. RAF1 then further activates the dual-specificity protein kinases MAP2K1/MEK1 and MAP2K2/MEK2. Both MAP2K1/MEK1 and MAP2K2/MEK2 function specifically in the MAPK/ERK cascade, and catalyze the concomitant phosphorylation of a threonine and a tyrosine residue in a Thr-Glu-Tyr sequence located in the extracellular signal-regulated kinases MAPK3/ERK1 and MAPK1/ERK2, leading to their activation and further transduction of the signal within the MAPK/ERK cascade. Activates BRAF in a KSR1 or KSR2-dependent manner; by binding to KSR1 or KSR2 releases the inhibitory intramolecular interaction between KSR1 or KSR2 protein kinase and N-terminal domains which promotes KSR1 or KSR2-BRAF dimerization and BRAF activation. Depending on the cellular context, this pathway mediates diverse biological functions such as cell growth, adhesion, survival and differentiation, predominantly through the regulation of transcription, metabolism and cytoskeletal rearrangements. One target of the MAPK/ERK cascade is peroxisome proliferator-activated receptor gamma (PPARG), a nuclear receptor that promotes differentiation and apoptosis. MAP2K1/MEK1 has been shown to export PPARG from the nucleus. The MAPK/ERK cascade is also involved in the regulation of endosomal dynamics, including lysosome processing and endosome cycling through the perinuclear recycling compartment (PNRC), as well as in the fragmentation of the Golgi apparatus during mitosis. In Mus musculus (Mouse), this protein is Dual specificity mitogen-activated protein kinase kinase 1 (Map2k1).